A 313-amino-acid polypeptide reads, in one-letter code: Ornithine carbamoyltransferase (313 aa).

Carbamoyl phosphate is bound by residues 57–60 (STRT), Arg-108, and 135–138 (HPTQ). L-ornithine is bound by residues Asn-167, Asp-231, and 235-236 (SM). Carbamoyl phosphate is bound by residues 272–273 (CL) and Arg-300.

Belongs to the aspartate/ornithine carbamoyltransferase superfamily. OTCase family.

It is found in the cytoplasm. The enzyme catalyses carbamoyl phosphate + L-ornithine = L-citrulline + phosphate + H(+). Its pathway is amino-acid biosynthesis; L-arginine biosynthesis; L-arginine from L-ornithine and carbamoyl phosphate: step 1/3. In terms of biological role, reversibly catalyzes the transfer of the carbamoyl group from carbamoyl phosphate (CP) to the N(epsilon) atom of ornithine (ORN) to produce L-citrulline. In Thermotoga maritima (strain ATCC 43589 / DSM 3109 / JCM 10099 / NBRC 100826 / MSB8), this protein is Ornithine carbamoyltransferase.